We begin with the raw amino-acid sequence, 204 residues long: Leucyl/phenylalanyl-tRNA--protein transferase (204 aa).

Belongs to the L/F-transferase family.

The protein localises to the cytoplasm. The catalysed reaction is N-terminal L-lysyl-[protein] + L-leucyl-tRNA(Leu) = N-terminal L-leucyl-L-lysyl-[protein] + tRNA(Leu) + H(+). It catalyses the reaction N-terminal L-arginyl-[protein] + L-leucyl-tRNA(Leu) = N-terminal L-leucyl-L-arginyl-[protein] + tRNA(Leu) + H(+). The enzyme catalyses L-phenylalanyl-tRNA(Phe) + an N-terminal L-alpha-aminoacyl-[protein] = an N-terminal L-phenylalanyl-L-alpha-aminoacyl-[protein] + tRNA(Phe). Its function is as follows. Functions in the N-end rule pathway of protein degradation where it conjugates Leu, Phe and, less efficiently, Met from aminoacyl-tRNAs to the N-termini of proteins containing an N-terminal arginine or lysine. This Rhizobium meliloti (strain 1021) (Ensifer meliloti) protein is Leucyl/phenylalanyl-tRNA--protein transferase.